Reading from the N-terminus, the 192-residue chain is Phosphoheptose isomerase (192 aa).

One can recognise an SIS domain in the interval 37-192; sequence LADSFKAGGK…IQLIEKEMVK (156 aa). 52-54 serves as a coordination point for substrate; the sequence is NGG. Zn(2+)-binding residues include H61 and E65. Substrate-binding positions include E65, 93 to 94, 119 to 121, S124, and Q172; these read ND and STS. Zn(2+) contacts are provided by Q172 and H180.

This sequence belongs to the SIS family. GmhA subfamily. As to quaternary structure, homotetramer. Requires Zn(2+) as cofactor.

Its subcellular location is the cytoplasm. The catalysed reaction is 2 D-sedoheptulose 7-phosphate = D-glycero-alpha-D-manno-heptose 7-phosphate + D-glycero-beta-D-manno-heptose 7-phosphate. Its pathway is carbohydrate biosynthesis; D-glycero-D-manno-heptose 7-phosphate biosynthesis; D-glycero-alpha-D-manno-heptose 7-phosphate and D-glycero-beta-D-manno-heptose 7-phosphate from sedoheptulose 7-phosphate: step 1/1. Catalyzes the isomerization of sedoheptulose 7-phosphate in D-glycero-D-manno-heptose 7-phosphate. The chain is Phosphoheptose isomerase from Enterobacter sp. (strain 638).